The chain runs to 78 residues: DNA-directed RNA polymerase subunit Rpo5 (78 aa).

It belongs to the archaeal Rpo5/eukaryotic RPB5 RNA polymerase subunit family. As to quaternary structure, part of the RNA polymerase complex.

It localises to the cytoplasm. The enzyme catalyses RNA(n) + a ribonucleoside 5'-triphosphate = RNA(n+1) + diphosphate. DNA-dependent RNA polymerase (RNAP) catalyzes the transcription of DNA into RNA using the four ribonucleoside triphosphates as substrates. The sequence is that of DNA-directed RNA polymerase subunit Rpo5 from Methanococcus maripaludis (strain C7 / ATCC BAA-1331).